We begin with the raw amino-acid sequence, 155 residues long: Ribosomal RNA large subunit methyltransferase H (155 aa).

Residues leucine 72, glycine 103, and 122–127 (LSDLTL) each bind S-adenosyl-L-methionine.

This sequence belongs to the RNA methyltransferase RlmH family. Homodimer.

The protein localises to the cytoplasm. It catalyses the reaction pseudouridine(1915) in 23S rRNA + S-adenosyl-L-methionine = N(3)-methylpseudouridine(1915) in 23S rRNA + S-adenosyl-L-homocysteine + H(+). In terms of biological role, specifically methylates the pseudouridine at position 1915 (m3Psi1915) in 23S rRNA. This chain is Ribosomal RNA large subunit methyltransferase H, found in Acidovorax sp. (strain JS42).